Here is a 390-residue protein sequence, read N- to C-terminus: 4-O-beta-D-mannosyl-D-glucose phosphorylase (390 aa).

It belongs to the glycosyl hydrolase 130 family.

It catalyses the reaction 4-O-beta-D-mannopyranosyl-D-glucopyranose + phosphate = alpha-D-mannose 1-phosphate + D-glucose. Its function is as follows. Converts 4-O-beta-D-mannopyranosyl-D-glucopyranose (Man-Glc) to mannose 1-phosphate (Man1P) and glucose. Involved in a mannan catabolic pathway which feeds into glycolysis. This Bacteroides fragilis (strain ATCC 25285 / DSM 2151 / CCUG 4856 / JCM 11019 / LMG 10263 / NCTC 9343 / Onslow / VPI 2553 / EN-2) protein is 4-O-beta-D-mannosyl-D-glucose phosphorylase.